The following is a 214-amino-acid chain: Adenylate kinase (214 aa).

10–15 is an ATP binding site; that stretch reads GAGKGT. Positions 30–59 are NMP; it reads STGDMFRAALKNQTPLGLKAKEYMDKGELV. Residues Thr-31, Arg-36, 57–59, 85–88, and Gln-92 contribute to the AMP site; these read ELV and GFPR. The LID stretch occupies residues 126 to 163; the sequence is GRRVCRQCGATYHVKFNPPKVEGVCDACGGELYQRSDD. Residue Arg-127 coordinates ATP. Positions 130 and 133 each coordinate Zn(2+). ATP is bound at residue 136–137; the sequence is TY. Cys-150 and Cys-153 together coordinate Zn(2+). The AMP site is built by Arg-160 and Arg-171. ATP is bound at residue Lys-199.

This sequence belongs to the adenylate kinase family. As to quaternary structure, monomer.

It is found in the cytoplasm. It catalyses the reaction AMP + ATP = 2 ADP. It functions in the pathway purine metabolism; AMP biosynthesis via salvage pathway; AMP from ADP: step 1/1. Catalyzes the reversible transfer of the terminal phosphate group between ATP and AMP. Plays an important role in cellular energy homeostasis and in adenine nucleotide metabolism. This chain is Adenylate kinase, found in Carboxydothermus hydrogenoformans (strain ATCC BAA-161 / DSM 6008 / Z-2901).